The chain runs to 668 residues: E3 ubiquitin-protein ligase RNF139 (668 aa).

Ala-2 carries the N-acetylalanine modification. A run of 11 helical transmembrane segments spans residues 51–71 (IGLQ…VLIL), 85–105 (AFLL…HIDF), 125–145 (SLWM…VTLL), 154–174 (LMIL…PLHI), 178–198 (VVLM…AVKL), 293–313 (GMSA…LAFI), 323–343 (LGFV…LSGL), 356–376 (MCLL…PVLM), 390–410 (FPVL…SYVL), 420–440 (LFAV…SLTV), and 470–490 (IIEF…MMFE). An RING-type; atypical zinc finger spans residues 547-586 (CAICYHEFTTSARITPCNHYFHALCLRKWLYIQDTCPMCH). A disordered region spans residues 602-668 (SNNNGFIAPN…AAAEFNDDTD (67 aa)). Positions 618 to 630 (EALREDAAGSDRE) are enriched in basic and acidic residues. Acidic residues predominate over residues 631 to 641 (LNEDDSTDCDD). A Phosphoserine modification is found at Ser-636. Phosphothreonine is present on residues Thr-637 and Thr-667.

In terms of assembly, interacts with VHL. Interacts with MHC class I and HM13. Component of SCAP-SREBP complex composed of SREBF2, SCAP and RNF139; the complex hampers the interaction between SCAP and SEC24B, thereby reducing SREBF2 proteolytic processing. Interacts with SREBF2 (via C-terminal domain). Interacts with SCAP; the interaction inhibits the interaction of SCAP with SEC24B and hampering the ER to Golgi transport of the SCAP-SREBP complex. Interacts with SEC24B. Interacts with INSIG1 and INSIG2. Interacts with EIF3F and EIF3H; the interaction leads to protein translation inhibitions in a ubiquitination-dependent manner. Interacts with XBP1 isoform 1; the interaction induces ubiquitination and degradation of XBP1 isoform 1. Interacts with AUP1, AMFR and UBE2G2; interaction with AUP1 facilitates interaction of RNF139 with ubiquitin-conjugating enzyme UBE2G2 and ubiquitin ligase AMFR/gp78, leading to sterol-induced ubiquitination of HMGCR and its subsequent proteasomal degradation. Autoubiquitinated. Ubiquitination is induced by sterol and leads to ist degradation via the ubiquitin-proteasome pathway.

It is found in the endoplasmic reticulum membrane. It catalyses the reaction S-ubiquitinyl-[E2 ubiquitin-conjugating enzyme]-L-cysteine + [acceptor protein]-L-lysine = [E2 ubiquitin-conjugating enzyme]-L-cysteine + N(6)-ubiquitinyl-[acceptor protein]-L-lysine.. It participates in protein modification; protein ubiquitination. Functionally, E3-ubiquitin ligase; acts as a negative regulator of cell proliferation through mechanisms involving G2/M arrest and cell death. Required for MHC class I ubiquitination in cells expressing the cytomegalovirus protein US2 before dislocation from the endoplasmic reticulum (ER). Affects SREBP processing by hindering the SREBP-SCAP complex translocation from the ER to the Golgi, thereby reducing SREBF2 target gene expression. Involved in the sterol-accelerated degradation of HMGCR. This is achieved through binding to INSIG1 and/or INSIG2 at the ER membrane. In addition, interaction of RNF139 with AUP1 facilitates interaction of RNF139 with ubiquitin-conjugating enzyme UBE2G2 and ubiquitin ligase AMFR, leading to ubiquitination of HMGCR. The ubiquitinated HMGCR is then released from the ER by the complex into the cytosol for subsequent destruction. Required for INSIG1 ubiquitination. May be required for EIF3 complex ubiquitination. In Mus musculus (Mouse), this protein is E3 ubiquitin-protein ligase RNF139.